We begin with the raw amino-acid sequence, 90 residues long: Putative membrane protein insertion efficiency factor (90 aa).

The disordered stretch occupies residues 68 to 90 (VPAHFSLRRNPQYKEEDHRGKKR). The span at 79-90 (QYKEEDHRGKKR) shows a compositional bias: basic and acidic residues.

Belongs to the UPF0161 family.

The protein resides in the cell membrane. In terms of biological role, could be involved in insertion of integral membrane proteins into the membrane. The chain is Putative membrane protein insertion efficiency factor from Lactiplantibacillus plantarum (strain ATCC BAA-793 / NCIMB 8826 / WCFS1) (Lactobacillus plantarum).